A 117-amino-acid chain; its full sequence is Immunoglobulin heavy variable 5-51 (117 aa).

Residues 1-19 form the signal peptide; sequence MGSTAILALLLAVLQGVCA. A framework-1 region spans residues 20 to 44; it reads EVQLVQSGAEVKKPGESLKISCKGS. Positions 20–117 constitute an Ig-like domain; it reads EVQLVQSGAE…SDTAMYYCAR (98 aa). Cys41 and Cys115 are joined by a disulfide. Residues 45–52 are complementarity-determining-1; sequence GYSFTSYW. The interval 53-69 is framework-2; it reads IGWVRQMPGKGLEWMGI. Residues 70 to 77 are complementarity-determining-2; it reads IYPGDSDT. Residues 78–115 form a framework-3 region; that stretch reads RYSPSFQGQVTISADKSISTAYLQWSSLKASDTAMYYC. Positions 116–117 are complementarity-determining-3; it reads AR.

Immunoglobulins are composed of two identical heavy chains and two identical light chains; disulfide-linked.

The protein localises to the secreted. It is found in the cell membrane. Functionally, v region of the variable domain of immunoglobulin heavy chains that participates in the antigen recognition. Immunoglobulins, also known as antibodies, are membrane-bound or secreted glycoproteins produced by B lymphocytes. In the recognition phase of humoral immunity, the membrane-bound immunoglobulins serve as receptors which, upon binding of a specific antigen, trigger the clonal expansion and differentiation of B lymphocytes into immunoglobulins-secreting plasma cells. Secreted immunoglobulins mediate the effector phase of humoral immunity, which results in the elimination of bound antigens. The antigen binding site is formed by the variable domain of one heavy chain, together with that of its associated light chain. Thus, each immunoglobulin has two antigen binding sites with remarkable affinity for a particular antigen. The variable domains are assembled by a process called V-(D)-J rearrangement and can then be subjected to somatic hypermutations which, after exposure to antigen and selection, allow affinity maturation for a particular antigen. In Homo sapiens (Human), this protein is Immunoglobulin heavy variable 5-51.